The sequence spans 317 residues: MSCTRMIHVLDPRPLTSSVMPVDMAMRICLAHSPPLKSFLGPYNGLQRRHFVNKPKPLKPCLSVKQEAKSQKEWKSPHSQAKKRVVFADSKGLSLTAIHVFSDLPEEPAWDLQFDLLDLNDISSSLKLHEEKNLVFDFPQPSSDYLSFRDRFQKNFVCLENCSLQDRTVTGTVKVKNVSFEKKVQVRITFDTWKTYTDVDCVYLKNVYGSSDSDTFSFAIDLPRVIPTEEKIEFCISYHANGRVFWDNNEAQNYRIVHVQWKPDGVQTQVAPKDCAFQQVPLKTELEPTVFGSPRLASGLFPEWQSWGRVENLASYR.

The PP1-binding motif motif lies at 84–87 (RVVF). Residues 141–263 (PSSDYLSFRD…YRIVHVQWKP (123 aa)) are interaction with EPM2A. Positions 149-257 (RDRFQKNFVC…NNEAQNYRIV (109 aa)) constitute a CBM21 domain.

In terms of assembly, interacts with PPP1CC catalytic subunit of PP1 and associates with glycogen. Forms complexes with glycogen phosphorylase, glycogen synthase and phosphorylase kinase which is necessary for its regulation of PP1 activity. Also interacts with EPM2A/laforin. Post-translationally, ubiquitinated by NHLRC1/malin in a EPM2A/laforin-dependent manner.

In terms of biological role, acts as a glycogen-targeting subunit for PP1 and regulates its activity. Activates glycogen synthase, reduces glycogen phosphorylase activity and limits glycogen breakdown. Dramatically increases basal and insulin-stimulated glycogen synthesis upon overexpression in a variety of cell types. This is Protein phosphatase 1 regulatory subunit 3C from Rattus norvegicus (Rat).